The following is a 497-amino-acid chain: C4-dicarboxylate transport protein (497 aa).

The next 8 helical transmembrane spans lie at 27–45 (LYVQ…GYFY), 60–82 (IMLV…IAGM), 95–117 (AMIY…ANVV), 168–185 (ILQV…LAIV), 205–227 (RLVA…FTIG), 237–259 (LAML…LGAV), 348–370 (ILLL…AGFI), and 374–393 (ATLS…ILGI). Residues 466-497 (ADRTLAGRPGGRDSRRIAPDHSAQVFGGPLSL) are disordered. Over residues 475 to 484 (GGRDSRRIAP) the composition is skewed to basic and acidic residues.

Belongs to the dicarboxylate/amino acid:cation symporter (DAACS) (TC 2.A.23) family.

The protein resides in the cell inner membrane. In terms of biological role, responsible for the transport of dicarboxylates such as succinate, fumarate, and malate from the periplasm across the inner membrane. This transport system plays an essential role in the energy supply of tropical rhizobium-legume symbionts. This Sinorhizobium fredii (strain NBRC 101917 / NGR234) protein is C4-dicarboxylate transport protein (dctA1).